Consider the following 398-residue polypeptide: Na(+)/H(+) antiporter NhaA (398 aa).

Helical transmembrane passes span 21-41 (LGGY…NSPL), 66-86 (VLHW…GLEI), 101-121 (IVLP…VYLL), 132-152 (GWAI…ALLG), 161-181 (IFLT…IAVF), 184-204 (AELN…LCVL), 216-236 (LLVG…ATLA), 274-294 (LLIV…GMGI), 305-325 (IALG…WLAI), 343-363 (GVAL…ALAF), and 374-394 (IGVL…LRVL).

This sequence belongs to the NhaA Na(+)/H(+) (TC 2.A.33) antiporter family.

It is found in the cell inner membrane. It carries out the reaction Na(+)(in) + 2 H(+)(out) = Na(+)(out) + 2 H(+)(in). Functionally, na(+)/H(+) antiporter that extrudes sodium in exchange for external protons. The polypeptide is Na(+)/H(+) antiporter NhaA (Bordetella bronchiseptica (strain ATCC BAA-588 / NCTC 13252 / RB50) (Alcaligenes bronchisepticus)).